The primary structure comprises 90 residues: MLQYRIIVDGRVQGVGFRYFVQMEADKHKLTGWVRNRDDGTVEIRAEGLEESLKQFLKAIQKGSPFSKVTDVKVEETKELDGFQKFNISY.

The Acylphosphatase-like domain maps to glutamine 3–tyrosine 90. Active-site residues include arginine 18 and asparagine 36.

This sequence belongs to the acylphosphatase family.

It catalyses the reaction an acyl phosphate + H2O = a carboxylate + phosphate + H(+). The chain is Acylphosphatase (acyP) from Bacillus licheniformis (strain ATCC 14580 / DSM 13 / JCM 2505 / CCUG 7422 / NBRC 12200 / NCIMB 9375 / NCTC 10341 / NRRL NRS-1264 / Gibson 46).